A 346-amino-acid chain; its full sequence is MGQDLPLLLSAALGKKVNRPPVWMMRQAGRYMKIYRDLRERYPSFRERSENPELSYEISMQPFHAFKPDGVILFSDILTPLPGMGINFEIIESKGPIIEDPIRNLNQIENLKELNPSESLSFVGQVLSSLKKDVNNEATVLGFVGAPWTLAAYVVEGKSSKNYSLIKSMAFKEPGLLHKLLDHFAKSIGEYLKYQIKSGAQVVQIFDSWAGQLSPEDYDIFAGPYQKKVVDIVKAEHPETPVILYISGSAGVIERMAKTGIDIISLDWTVDIEEACKRIPSGIGIQGNVDPGILFGNKESIKERIDNTFNKTKDRKYILNLGHGILPGTPEENAQTFFEHGKKLTY.

Substrate is bound by residues 26–30 (RQAGR), Asp-76, Tyr-153, Ser-208, and His-323.

The protein belongs to the uroporphyrinogen decarboxylase family. In terms of assembly, homodimer.

It is found in the cytoplasm. It carries out the reaction uroporphyrinogen III + 4 H(+) = coproporphyrinogen III + 4 CO2. It functions in the pathway porphyrin-containing compound metabolism; protoporphyrin-IX biosynthesis; coproporphyrinogen-III from 5-aminolevulinate: step 4/4. Catalyzes the decarboxylation of four acetate groups of uroporphyrinogen-III to yield coproporphyrinogen-III. In Prochlorococcus marinus (strain MIT 9215), this protein is Uroporphyrinogen decarboxylase.